The chain runs to 523 residues: Protein disulfide-isomerase (523 aa).

Residues Met-1–Ala-22 form the signal peptide. One can recognise a Thioredoxin 1 domain in the interval Asp-24 to Pro-137. Residues Cys-59 and Cys-62 each act as nucleophile in the active site. Residues Cys-59 and Cys-62 are joined by a disulfide bond. An N-linked (GlcNAc...) asparagine glycan is attached at Asn-170. The Thioredoxin 2 domain maps to Val-344–Lys-475. Residues Cys-394 and Cys-397 are joined by a disulfide bond. Composition is skewed to basic and acidic residues over residues Val-478–Ala-502 and Ser-512–Leu-523. Residues Val-478–Leu-523 are disordered. A Prevents secretion from ER motif is present at residues His-520–Leu-523.

It belongs to the protein disulfide isomerase family.

It localises to the endoplasmic reticulum lumen. It catalyses the reaction Catalyzes the rearrangement of -S-S- bonds in proteins.. Participates in the folding of proteins containing disulfide bonds, may be involved in glycosylation, prolyl hydroxylation and triglyceride transfer. The chain is Protein disulfide-isomerase from Arthroderma benhamiae (strain ATCC MYA-4681 / CBS 112371) (Trichophyton mentagrophytes).